The primary structure comprises 280 residues: Bis(5'-nucleosyl)-tetraphosphatase, symmetrical (280 aa).

It belongs to the Ap4A hydrolase family.

It carries out the reaction P(1),P(4)-bis(5'-adenosyl) tetraphosphate + H2O = 2 ADP + 2 H(+). In terms of biological role, hydrolyzes diadenosine 5',5'''-P1,P4-tetraphosphate to yield ADP. This chain is Bis(5'-nucleosyl)-tetraphosphatase, symmetrical, found in Escherichia coli O17:K52:H18 (strain UMN026 / ExPEC).